The chain runs to 184 residues: MSWRSEHIWIDLITGSRKISNLCWAFTLFLGSLGFVLVGTYSYLGRNLISFFPLQQIIFFPQGIVMSFYGIAGLFISSYLWCTISWNVGSGYDLFNRKEGIVCIFRWGFPGINRRIFLRFLLKDIRSVRIEVEEGIYAGRVLYMDIRGHRAIPLTRTDENLTPGELEKKAAELAYFLRVPIEVF.

A run of 2 helical transmembrane segments spans residues 19 to 39 (ISNLCWAFTLFLGSLGFVLVG) and 57 to 77 (IIFFPQGIVMSFYGIAGLFIS).

Belongs to the Ycf4 family.

The protein localises to the plastid thylakoid membrane. Its function is as follows. Seems to be required for the assembly of the photosystem I complex. The polypeptide is Photosystem I assembly protein Ycf4 (Cuscuta reflexa (Southern Asian dodder)).